The chain runs to 308 residues: Porphobilinogen deaminase (308 aa).

At cysteine 242 the chain carries S-(dipyrrolylmethanemethyl)cysteine.

It belongs to the HMBS family. Monomer. Dipyrromethane serves as cofactor.

The catalysed reaction is 4 porphobilinogen + H2O = hydroxymethylbilane + 4 NH4(+). It functions in the pathway porphyrin-containing compound metabolism; protoporphyrin-IX biosynthesis; coproporphyrinogen-III from 5-aminolevulinate: step 2/4. In terms of biological role, tetrapolymerization of the monopyrrole PBG into the hydroxymethylbilane pre-uroporphyrinogen in several discrete steps. This is Porphobilinogen deaminase from Alkalilimnicola ehrlichii (strain ATCC BAA-1101 / DSM 17681 / MLHE-1).